Reading from the N-terminus, the 544-residue chain is MAAKQVLFSDEARAKMLDGVNTLANAVKVTLGPKGRNVVLDKSFGAPTITKDGVSVAKEIELEDKFENMGAQIVKEVASKTADVAGDGTTTATVLAQALLTEGLKAVAAGINPMDLKRGIDKATARLVEELKALSKPCSDPKSIEQVGTISANSDATVGKLIADAMAKVGKEGVITVEEGKGFEDELDVVEGMQFDRGYLSPYFATNQENMTTDLENPYILIVDKKISNIRDLLPILEGVSKSGRALLIIAEDVESEALATLVVNNMRGVVKVCAVKAPGFGDRRKAMLEDIATLTGATFVSEDLSMKLEETNMEHLGTASRVQVTKDNTTIIDGAGEKEAIAKRINVIKANIAEANSDYDREKLQERLAKLSGGVAVIKVGAVTEAEMKEKKDRVDDALHATRAAVEEGIVAGGGVALIRAQKALDGLTGENDDQNHGIALLRKAIEAPLRQIVSNAGGESSVVVNQVKANQGNYGYNAANDTYGDMVEMGILDPTKVTRSALQHAASIAGLMITTEAMIGEIKEAAPAMPMGGGMGGMPGMI.

Residues 30 to 33 (TLGP), lysine 51, 87 to 91 (DGTTT), glycine 415, 479 to 481 (NAA), and aspartate 495 contribute to the ATP site.

It belongs to the chaperonin (HSP60) family. Forms a cylinder of 14 subunits composed of two heptameric rings stacked back-to-back. Interacts with the co-chaperonin GroES.

It localises to the cytoplasm. The catalysed reaction is ATP + H2O + a folded polypeptide = ADP + phosphate + an unfolded polypeptide.. Functionally, together with its co-chaperonin GroES, plays an essential role in assisting protein folding. The GroEL-GroES system forms a nano-cage that allows encapsulation of the non-native substrate proteins and provides a physical environment optimized to promote and accelerate protein folding. The protein is Chaperonin GroEL of Francisella tularensis subsp. mediasiatica (strain FSC147).